The sequence spans 468 residues: tRNA modification GTPase MnmE (468 aa).

(6S)-5-formyl-5,6,7,8-tetrahydrofolate contacts are provided by R29, E97, and K136. The TrmE-type G domain maps to 232–390 (GFELAIVGRP…VVAHIVARME (159 aa)). Residue N242 coordinates K(+). Residues 242–247 (NVGKSS), 261–267 (TDLAGTT), and 286–289 (DTAG) contribute to the GTP site. Residue S246 coordinates Mg(2+). The K(+) site is built by T261, L263, and T266. A Mg(2+)-binding site is contributed by T267. K468 contributes to the (6S)-5-formyl-5,6,7,8-tetrahydrofolate binding site.

The protein belongs to the TRAFAC class TrmE-Era-EngA-EngB-Septin-like GTPase superfamily. TrmE GTPase family. Homodimer. Heterotetramer of two MnmE and two MnmG subunits. Requires K(+) as cofactor.

It localises to the cytoplasm. Exhibits a very high intrinsic GTPase hydrolysis rate. Involved in the addition of a carboxymethylaminomethyl (cmnm) group at the wobble position (U34) of certain tRNAs, forming tRNA-cmnm(5)s(2)U34. The sequence is that of tRNA modification GTPase MnmE from Magnetococcus marinus (strain ATCC BAA-1437 / JCM 17883 / MC-1).